A 606-amino-acid chain; its full sequence is Proton myo-inositol cotransporter hmit-1.1 (606 aa).

Residues 1-20 (MVAVAAFSSSGQDKPAHTPK) are Cytoplasmic-facing. The chain crosses the membrane as a helical span at residues 21-41 (LGLFVYILAAASVIGGFLFGY). The Extracellular segment spans residues 42–63 (DTSVVSAAMLYMPDAPGLKPMD). The helical transmembrane segment at 64-84 (TVWQEVLVSISPGMAAVGSLM) threads the bilayer. Topologically, residues 85-96 (SGTSSDYIGRRK) are cytoplasmic. Residues 97–117 (VILGASAIFTIGALVCAASVN) form a helical membrane-spanning segment. Position 118 (Lys118) is a topological domain, extracellular. The chain crosses the membrane as a helical span at residues 119–139 (IMLLVGRVLLGIAIGFASMIV). Residues 140–152 (PVYLGETAPTHVR) are Cytoplasmic-facing. The chain crosses the membrane as a helical span at residues 153 to 173 (GMLVAAFALMISFGQVVANIT). Topologically, residues 174–188 (GGAFSYIDPYNVGWR) are extracellular. Residues 189-209 (LMFAFAAVPSIIQFVCFMFLP) traverse the membrane as a helical segment. Residues 210-278 (ETPRWLYENG…RILKTPHVLK (69 aa)) lie on the Cytoplasmic side of the membrane. Residues 279 to 299 (ACFIGSMLQAFQQLAGINTIL) traverse the membrane as a helical segment. Residues 300–317 (YYTADIIRSSGISNNHTT) are Extracellular-facing. Asn314 carries N-linked (GlcNAc...) asparagine glycosylation. Residues 318–338 (IWISVLLSLCNFIGPFVPMSL) traverse the membrane as a helical segment. Over 339–345 (IEKVGRR) the chain is Cytoplasmic. A helical membrane pass occupies residues 346 to 366 (IIFLFSCGLVVLSLVFIGVAF). Residues 367–464 (LLVNHDSAAT…EKYYCDTKYT (98 aa)) lie on the Extracellular side of the membrane. N-linked (GlcNAc...) asparagine glycans are attached at residues Asn387 and Asn445. A helical membrane pass occupies residues 465–485 (LLPIIACGVYLLTFSSGFTSL). At 486–501 (PWVLNSEFYPMWARST) the chain is on the cytoplasmic side. Residues 502-522 (CVAISTTSNWVFNLIIALTYL) traverse the membrane as a helical segment. Topologically, residues 523-531 (SLTQVIGKY) are extracellular. A helical membrane pass occupies residues 532–552 (GAFWLYAGLTVIAFIFILFLV). The Cytoplasmic segment spans residues 553–606 (PETKGYSIEEVEMLFMNKKQRREAESRRRETVTEVRSRMNSTVSFGQHNEVHKY).

Belongs to the major facilitator superfamily. Sugar transporter (TC 2.A.1.1) family. In terms of tissue distribution, expressed in the intestine.

It localises to the cell membrane. It catalyses the reaction myo-inositol(out) + H(+)(out) = myo-inositol(in) + H(+)(in). Functionally, h(+)-myo-inositol cotransporter. Probably by promoting the transport of myo-inositol regulates intracellular osmosis in response to hyperosmotic stress. The polypeptide is Proton myo-inositol cotransporter hmit-1.1 (Caenorhabditis elegans).